A 409-amino-acid chain; its full sequence is Argininosuccinate synthase (409 aa).

Residues 11–19 (AYSGGLDTS) and alanine 38 contribute to the ATP site. Positions 91 and 96 each coordinate L-citrulline. Residue glycine 121 participates in ATP binding. L-aspartate is bound by residues threonine 123, asparagine 127, and aspartate 128. Asparagine 127 provides a ligand contact to L-citrulline. L-citrulline contacts are provided by arginine 131, serine 182, serine 191, glutamate 267, and tyrosine 279.

Belongs to the argininosuccinate synthase family. Type 1 subfamily. As to quaternary structure, homotetramer.

The protein localises to the cytoplasm. The enzyme catalyses L-citrulline + L-aspartate + ATP = 2-(N(omega)-L-arginino)succinate + AMP + diphosphate + H(+). The protein operates within amino-acid biosynthesis; L-arginine biosynthesis; L-arginine from L-ornithine and carbamoyl phosphate: step 2/3. The sequence is that of Argininosuccinate synthase from Xanthobacter autotrophicus (strain ATCC BAA-1158 / Py2).